A 337-amino-acid polypeptide reads, in one-letter code: Hsp90 co-chaperone Cdc37-like 1 (337 aa).

Pro residues predominate over residues 1 to 11 (MEQPWPPPGPW). The disordered stretch occupies residues 1-43 (MEQPWPPPGPWSLPRAEGEAEEESDLDLSPGSPRCPQLPGGGT). The interval 2-171 (EQPWPPPGPW…HEQKIRHFGM (170 aa)) is self-association. Phosphoserine is present on residues S32 and S88. The stretch at 84 to 122 (HNSESLDQEHAKAQTAISELRQREEEWRQKEEALVQRER) forms a coiled coil. The segment at 147–277 (KETEDEDKSK…SRVRLYSQSP (131 aa)) is self-association and interaction with Hsp90. The interaction with Hsp70 stretch occupies residues 267–337 (KSRVRLYSQS…DDEPKMMDTV (71 aa)). The segment at 278-337 (NFQPVTVQNHVPHSGVGSIGLLESLPQNPDYLQYSINTALCSLNSVVHKEDDEPKMMDTV) is required for interaction with STIP1.

Belongs to the CDC37 family. In terms of assembly, self-associates. Forms complexes with Hsp70 and Hsp90. Interacts with CDC37, FKBP4, PPID and STIP1.

The protein resides in the cytoplasm. Its function is as follows. Co-chaperone that binds to numerous proteins and promotes their interaction with Hsp70 and Hsp90. The sequence is that of Hsp90 co-chaperone Cdc37-like 1 (CDC37L1) from Bos taurus (Bovine).